Reading from the N-terminus, the 152-residue chain is SKP1-like protein 11 (152 aa).

Residues 94-152 (ILAANYLNIKSLLDLTCQTVADMIKGKTPEEIRSTFNIENDFTPEEEEAVRKENQWAFE) form an interaction with the F-box domain of F-box proteins region.

The protein belongs to the SKP1 family. Part of a SCF (SKP1-cullin-F-box) protein ligase complex. Interacts with ADO3/FKF1, COI1/FBL2, EBF1/FBL6, PP2A13, PP2B10, UFO, SKIP2, SKIP15, SKIP16, SKIP32, CPR1/CPR30, At1g55000, At1g67340, At1g78100, At3g04660, At3g16740, At3g61590, At4g38940 and At5g49610. Expressed in young seedlings, cotyledons, roots, leaves, floral stems, inflorescences, pollen, and siliques, with a slightly higher level in inflorescence than in other tissues.

The protein localises to the nucleus. It participates in protein modification; protein ubiquitination. Its function is as follows. Involved in ubiquitination and subsequent proteasomal degradation of target proteins. Together with CUL1, RBX1 and a F-box protein, it forms a SCF E3 ubiquitin ligase complex. The functional specificity of this complex depends on the type of F-box protein. In the SCF complex, it serves as an adapter that links the F-box protein to CUL1. Plays a role during early flowers reproductive development. The sequence is that of SKP1-like protein 11 (ASK11) from Arabidopsis thaliana (Mouse-ear cress).